Consider the following 368-residue polypeptide: Propane 2-monooxygenase, hydroxylase component small subunit (368 aa).

This sequence belongs to the TmoE/XamoE family. In terms of assembly, the propane 2-monooxygenase multicomponent enzyme system is composed of an electron transfer component and a monooxygenase component interacting with the effector protein PrmD. The electron transfer component is composed of a reductase (PrmB), and the monooxygenase component is formed by a large subunit (PrmA) and a small subunit (PrmC). Probably requires the presence of the chaperonin-like protein PrmG to ensure a productive folding, resulting of a soluble PrmC, which leads to the active form of PrmABCD.

The catalysed reaction is propane + NADH + O2 + H(+) = propan-2-ol + NAD(+) + H2O. In terms of biological role, component of the propane 2-monooxygenase multicomponent enzyme system which is involved in the degradation of propane via the O2-dependent hydroxylation of propane. Also able to catalyze the oxidation the water contaminant N-nitrosodimethylamine (NDMA). The chain is Propane 2-monooxygenase, hydroxylase component small subunit from Rhodococcus jostii (strain RHA1).